The primary structure comprises 271 residues: Eukaryotic translation initiation factor 2 subunit beta (271 aa).

The C4-type zinc-finger motif lies at 223-247; sequence CLGCQSPDTILSKENRLFFLRCEKC.

The protein belongs to the eIF-2-beta/eIF-5 family. Eukaryotic translation initiation factor 2 eIF2 is a heterotrimeric complex composed of an alpha, a beta and a gamma subunit.

Its subcellular location is the cytoplasm. It is found in the cytosol. In terms of biological role, component of the eIF2 complex that functions in the early steps of protein synthesis by forming a ternary complex with GTP and initiator tRNA. This complex binds to a 40S ribosomal subunit, followed by mRNA binding to form a 43S pre-initiation complex (43S PIC). Junction of the 60S ribosomal subunit to form the 80S initiation complex is preceded by hydrolysis of the GTP bound to eIF2 and release of an eIF2-GDP binary complex. In order for eIF2 to recycle and catalyze another round of initiation, the GDP bound to eIF2 must exchange with GTP by way of a reaction catalyzed by eIF2B. In Malus domestica (Apple), this protein is Eukaryotic translation initiation factor 2 subunit beta.